Here is a 95-residue protein sequence, read N- to C-terminus: Co-chaperonin GroES (95 aa).

The protein belongs to the GroES chaperonin family. Heptamer of 7 subunits arranged in a ring. Interacts with the chaperonin GroEL.

It localises to the cytoplasm. Functionally, together with the chaperonin GroEL, plays an essential role in assisting protein folding. The GroEL-GroES system forms a nano-cage that allows encapsulation of the non-native substrate proteins and provides a physical environment optimized to promote and accelerate protein folding. GroES binds to the apical surface of the GroEL ring, thereby capping the opening of the GroEL channel. This chain is Co-chaperonin GroES, found in Novosphingobium aromaticivorans (strain ATCC 700278 / DSM 12444 / CCUG 56034 / CIP 105152 / NBRC 16084 / F199).